The primary structure comprises 213 residues: Kynurenine formamidase (213 aa).

Residue tryptophan 20 participates in substrate binding. 3 residues coordinate Zn(2+): histidine 50, histidine 54, and aspartate 56. The active-site Proton donor/acceptor is histidine 60. Zn(2+) is bound by residues histidine 161 and glutamate 173.

The protein belongs to the Cyclase 1 superfamily. KynB family. In terms of assembly, homodimer. Zn(2+) serves as cofactor.

The catalysed reaction is N-formyl-L-kynurenine + H2O = L-kynurenine + formate + H(+). It participates in amino-acid degradation; L-tryptophan degradation via kynurenine pathway; L-kynurenine from L-tryptophan: step 2/2. In terms of biological role, catalyzes the hydrolysis of N-formyl-L-kynurenine to L-kynurenine, the second step in the kynurenine pathway of tryptophan degradation. This chain is Kynurenine formamidase, found in Pseudomonas aeruginosa (strain UCBPP-PA14).